We begin with the raw amino-acid sequence, 655 residues long: Spastin (655 aa).

At 1 to 58 the chain is on the cytoplasmic side; that stretch reads MLFDLINSFLKNGINNSNNNNNNNNNKNNFYNSLEDDDYLLNNQTTKVSLYLYFFIFA. The helical intramembrane region spans 59–79; it reads FMFLVVDLIMLYYKHRENIES. Residues 80–655 are Cytoplasmic-facing; it reads RETDLSLKLN…EKWNQKFGTI (576 aa). The span at 102 to 140 shows a compositional bias: low complexity; sequence KSSPTTSTTTTTITPTTTSSSQLRQPSTPKTTTKTINSP. The interval 102–151 is disordered; sequence KSSPTTSTTTTTITPTTTSSSQLRQPSTPKTTTKTINSPPSTPKSPPPLP. The span at 141–151 shows a compositional bias: pro residues; that stretch reads PSTPKSPPPLP. Residues 169–232 enclose the MIT domain; it reads LNEAKSQIDS…KRAEYLKNEL (64 aa). Residues 261–325 are disordered; the sequence is EQQQQQQQQS…TITSPGNKYG (65 aa). Low complexity predominate over residues 262-320; it reads QQQQQQQQSSSTYRNSLNLSSSKSNSTINNRHSISSLSSLNSTTATTTTPSNTSTITSP. 424–431 serves as a coordination point for ATP; that stretch reads GPPGNGKT.

It belongs to the AAA ATPase family. Spastin subfamily. As to quaternary structure, homohexamer. The homohexamer is stabilized by ATP-binding. The homohexamer may adopt a ring conformation through which microtubules pass prior to being severed. Interacts with microtubules.

It localises to the membrane. The protein resides in the cytoplasm. Its subcellular location is the cytoskeleton. The protein localises to the microtubule organizing center. It is found in the centrosome. It carries out the reaction n ATP + n H2O + a microtubule = n ADP + n phosphate + (n+1) alpha/beta tubulin heterodimers.. Functionally, ATP-dependent microtubule severing protein. Microtubule severing may promote reorganization of cellular microtubule arrays and the release of microtubules from the microtubule organizing center following nucleation. The protein is Spastin of Dictyostelium discoideum (Social amoeba).